The chain runs to 1390 residues: ABC transporter G family member 43 (1390 aa).

The interval 1 to 22 is disordered; it reads MTMPQTDGVEFASRNNLENGDG. One can recognise an ABC transporter 1 domain in the interval 137–411; the sequence is SKLSRFTFSK…FEDCGFKCPQ (275 aa). 171-178 is an ATP binding site; sequence GPPGCGKT. Residues 489-701 enclose the ABC transmembrane type-2 1 domain; the sequence is DMFKACSRRE…AEIGLTSNEF (213 aa). Helical transmembrane passes span 507-527, 541-561, 594-614, 626-646, 651-671, and 737-757; these read FVYV…MTVY, YLLG…LPEL, IPIS…VIGY, LILF…GAVF, VATT…GFIV, and FGAL…ALTF. Residues 798 to 1043 form the ABC transporter 2 domain; sequence FTFQDVQYFI…VIEYFMSIPG (246 aa). 835 to 842 contacts ATP; the sequence is GVSGAGKT. An ABC transmembrane type-2 2 domain is found at 1115 to 1329; sequence EQFKACLWKQ…VLNGLLTSQY (215 aa). Transmembrane regions (helical) follow at residues 1134-1154, 1173-1193, 1218-1238, 1253-1273, 1279-1299, 1307-1327, and 1362-1382; these read YNLT…ILFL, MFTV…FCVA, VLVE…IVYP, FYSI…LVVV, IAFT…GYVM, WWIW…LLTS, and LVAV…AFFI.

This sequence belongs to the ABC transporter superfamily. ABCG family. PDR (TC 3.A.1.205) subfamily.

It localises to the membrane. Its function is as follows. May be a general defense protein. In Arabidopsis thaliana (Mouse-ear cress), this protein is ABC transporter G family member 43 (ABCG43).